The sequence spans 387 residues: Methyltransferase phomM' (387 aa).

The methyltransferase domain stretch occupies residues 98–223 (PHRPKDLHIL…QSVADLFTTL (126 aa)).

This sequence belongs to the class I-like SAM-binding methyltransferase superfamily. Erg6/SMT family.

It functions in the pathway mycotoxin biosynthesis. Functionally, methyltransferase; part of the gene cluster that mediates the biosynthesis of the phomopsins, a group of hexapeptide mycotoxins which infects lupins and causes lupinosis disease in livestock. Within the pathway, phomM' acts as an S-adenosylmethionine-dependent alpha-N-methyltransferase that catalyzes two successive N-methylation reactions, converting N-desmethyl-phomopsin A to phomopsin A and phomopsin A further to an N,N-dimethylated congener called phomopsin E. The pathway starts with the processing of the precursor phomA' by several endopeptidases including kexin proteases as well as the cluster-specific S41 family peptidase phomP1 and the oligopeptidase phomG' to produce 10 identical copies of the hexapeptide Tyr-Val-Ile-Pro-Ile-Asp. After being excised from the precursor peptide, the core peptides are cyclized and modified post-translationally by enzymes encoded within the gene cluster. The timing and order of proteolysis of the phomA' precursor and PTMs are still unknown. Two tyrosinase-like enzymes, phomQ1' and phomQ2, catalyze the chlorination and hydroxylation of Tyr, respectively. PhomYb, is proposed to be involved in the construction of the macrocyclic structure. The other 4 ustYa family proteins may be involved in PTMs that generate the unique structure of phomopsin A. PhomYa' is required for the hydroxylation of C-beta of Tyr. PhomYc', phomYd', and phomYe are responsible for the biosynthesis of 2,3-dehydroisoleucine (dIle), 2,3-dehydroaspartic acid (dAsp), and 3,4-dehydroproline (dPro), respectively. While dIle formation by phomYc' is indispensable for the installation of dAsp by phomYd', the order of the other PTMs have not been elucidated yet. Most of the biosynthetic enzymes likely have broad substrate specificity, and thus, there might be a metabolic grid from a precursor to phomopsin A. The enzyme(s) responsible for the biosynthesis of 3,4-dehydrovaline (dVal) have also not been identified yet. Finally, phomM' acts as an S-adenosylmethionine-dependent alpha-N-methyltransferase that catalyzes two successive N-methylation reactions, converting N-desmethyl-phomopsin A to phomopsin A and phomopsin A further to an N,N-dimethylated congener called phomopsin E. The chain is Methyltransferase phomM' from Diaporthe leptostromiformis (Lupinosis disease fungus).